The following is a 150-amino-acid chain: Large ribosomal subunit protein bL9 (150 aa).

This sequence belongs to the bacterial ribosomal protein bL9 family.

In terms of biological role, binds to the 23S rRNA. This chain is Large ribosomal subunit protein bL9, found in Pseudoalteromonas translucida (strain TAC 125).